The following is an 86-amino-acid chain: Large ribosomal subunit protein eL20 (86 aa).

This sequence belongs to the eukaryotic ribosomal protein eL20 family. As to quaternary structure, part of the 50S ribosomal subunit. Binds 23S rRNA.

The polypeptide is Large ribosomal subunit protein eL20 (Saccharolobus solfataricus (strain ATCC 35092 / DSM 1617 / JCM 11322 / P2) (Sulfolobus solfataricus)).